Consider the following 41-residue polypeptide: Photosystem I reaction center subunit IX (41 aa).

The helical transmembrane segment at 7 to 27 (YLSTAPVVAAAWFTFTAGLLI) threads the bilayer.

It belongs to the PsaJ family.

It is found in the plastid. Its subcellular location is the chloroplast thylakoid membrane. In terms of biological role, may help in the organization of the PsaE and PsaF subunits. In Oltmannsiellopsis viridis (Marine flagellate), this protein is Photosystem I reaction center subunit IX.